A 286-amino-acid polypeptide reads, in one-letter code: tRNA pseudouridine synthase A (286 aa).

The active-site Nucleophile is the Asp60. Tyr132 is a substrate binding site.

The protein belongs to the tRNA pseudouridine synthase TruA family. As to quaternary structure, homodimer.

The enzyme catalyses uridine(38/39/40) in tRNA = pseudouridine(38/39/40) in tRNA. Functionally, formation of pseudouridine at positions 38, 39 and 40 in the anticodon stem and loop of transfer RNAs. The polypeptide is tRNA pseudouridine synthase A (Mycobacterium leprae (strain TN)).